The primary structure comprises 119 residues: Protein Wnt-4 (119 aa).

A lipid anchor (O-palmitoleoyl serine; by PORCN) is attached at serine 1. 2 disulfides stabilise this stretch: cysteine 69/cysteine 100 and cysteine 85/cysteine 95. Asparagine 86 carries N-linked (GlcNAc...) asparagine glycosylation.

This sequence belongs to the Wnt family. In terms of processing, palmitoleoylation is required for efficient binding to frizzled receptors. Depalmitoleoylation leads to Wnt signaling pathway inhibition.

It is found in the secreted. The protein localises to the extracellular space. Its subcellular location is the extracellular matrix. Functionally, ligand for members of the frizzled family of seven transmembrane receptors. Plays an important role in embryonic development. The chain is Protein Wnt-4 (WNT-4) from Eptatretus stoutii (Pacific hagfish).